The chain runs to 691 residues: DNA ligase (691 aa).

NAD(+) is bound by residues 41–45 (DAEYD), 90–91 (SL), and Glu-130. The N6-AMP-lysine intermediate role is filled by Lys-132. Arg-153, Glu-190, Lys-307, and Lys-331 together coordinate NAD(+). Zn(2+) is bound by residues Cys-425, Cys-428, Cys-443, and Cys-449. Residues 610–691 (APQGVLAGKT…MHTLLEGHAR (82 aa)) enclose the BRCT domain.

It belongs to the NAD-dependent DNA ligase family. LigA subfamily. Mg(2+) is required as a cofactor. Requires Mn(2+) as cofactor.

It carries out the reaction NAD(+) + (deoxyribonucleotide)n-3'-hydroxyl + 5'-phospho-(deoxyribonucleotide)m = (deoxyribonucleotide)n+m + AMP + beta-nicotinamide D-nucleotide.. DNA ligase that catalyzes the formation of phosphodiester linkages between 5'-phosphoryl and 3'-hydroxyl groups in double-stranded DNA using NAD as a coenzyme and as the energy source for the reaction. It is essential for DNA replication and repair of damaged DNA. This chain is DNA ligase, found in Burkholderia pseudomallei (strain 1106a).